The sequence spans 886 residues: Desmocollin-1 (886 aa).

A signal peptide spans 1 to 29 (MAVACAAPGSTFSKQLLFFLLVLVLFCDA). The propeptide occupies 30-134 (CQKVSLHVPS…KEPVHNRSKR (105 aa)). 2 N-linked (GlcNAc...) asparagine glycosylation sites follow: N130 and N165. 5 Cadherin domains span residues 135 to 242 (RWAP…APYF), 243 to 354 (ETKL…SPYF), 355 to 471 (TQTS…GPEC), 472 to 575 (QPPV…DHPP), and 576 to 682 (QIDK…EERD). Residues 135 to 691 (RWAPIPCSLM…DAKPNIILGK (557 aa)) lie on the Extracellular side of the membrane. T385 is modified (phosphothreonine). N546 carries N-linked (GlcNAc...) (high mannose) asparagine glycosylation. N613 is a glycosylation site (N-linked (GlcNAc...) asparagine). Residues 692–714 (WAILAMVLGSALLLCILFTCFCV) traverse the membrane as a helical segment. Over 715 to 886 (TTTKRTVKKC…RTLAKTCVKK (172 aa)) the chain is Cytoplasmic.

In terms of assembly, binds to JUP/plakoglobin. As to expression, expressed in the epidermis and inner root sheaths of hair follicles (at protein level).

The protein localises to the cell membrane. It localises to the cell junction. Its subcellular location is the desmosome. Its function is as follows. A component of desmosome cell-cell junctions which are required for positive regulation of cellular adhesion. Required for desmosome adhesion strength between the granular layers of the epidermis, as a result moderates epidermal proliferation and differentiation. Is therefore required to maintain postnatal epidermal barrier function and normal hair follicle morphology into adulthood. This chain is Desmocollin-1 (Dsc1), found in Mus musculus (Mouse).